The chain runs to 121 residues: MARQNDMGREGESEARAYLVKHGYNVLHTNWHWHHYELDIIAVKEDELIVVEVKTRSEDFLLSPEDAVDTKKIRRIVAAADAYVRYFNIDLPVRFDIVTLIKKETGFLIDHIEDAFYAPCR.

It belongs to the UPF0102 family.

The chain is UPF0102 protein BDI_2565 from Parabacteroides distasonis (strain ATCC 8503 / DSM 20701 / CIP 104284 / JCM 5825 / NCTC 11152).